A 445-amino-acid chain; its full sequence is Phosphoglucosamine mutase (445 aa).

The active-site Phosphoserine intermediate is the Ser-102. Mg(2+) is bound by residues Ser-102, Asp-241, Asp-243, and Asp-245. Ser-102 is subject to Phosphoserine.

Belongs to the phosphohexose mutase family. Requires Mg(2+) as cofactor. Activated by phosphorylation.

It carries out the reaction alpha-D-glucosamine 1-phosphate = D-glucosamine 6-phosphate. Functionally, catalyzes the conversion of glucosamine-6-phosphate to glucosamine-1-phosphate. This Serratia proteamaculans (strain 568) protein is Phosphoglucosamine mutase.